Consider the following 271-residue polypeptide: Phosphonoacetaldehyde hydrolase (271 aa).

The Nucleophile role is filled by D12. Mg(2+) is bound by residues D12 and A14. K54 (schiff-base intermediate with substrate) is an active-site residue. A Mg(2+)-binding site is contributed by D188.

The protein belongs to the HAD-like hydrolase superfamily. PhnX family. As to quaternary structure, homodimer. The cofactor is Mg(2+).

The enzyme catalyses phosphonoacetaldehyde + H2O = acetaldehyde + phosphate + H(+). Its function is as follows. Involved in phosphonate degradation. The chain is Phosphonoacetaldehyde hydrolase from Vibrio vulnificus (strain CMCP6).